A 235-amino-acid polypeptide reads, in one-letter code: 7-cyano-7-deazaguanine synthase (235 aa).

8–18 serves as a coordination point for ATP; that stretch reads FSGGQDSTTCL. Cys187, Cys196, Cys199, and Cys202 together coordinate Zn(2+).

This sequence belongs to the QueC family. It depends on Zn(2+) as a cofactor.

It carries out the reaction 7-carboxy-7-deazaguanine + NH4(+) + ATP = 7-cyano-7-deazaguanine + ADP + phosphate + H2O + H(+). The protein operates within purine metabolism; 7-cyano-7-deazaguanine biosynthesis. Catalyzes the ATP-dependent conversion of 7-carboxy-7-deazaguanine (CDG) to 7-cyano-7-deazaguanine (preQ(0)). In Aeromonas hydrophila subsp. hydrophila (strain ATCC 7966 / DSM 30187 / BCRC 13018 / CCUG 14551 / JCM 1027 / KCTC 2358 / NCIMB 9240 / NCTC 8049), this protein is 7-cyano-7-deazaguanine synthase.